Here is a 699-residue protein sequence, read N- to C-terminus: Glycine--tRNA ligase beta subunit (699 aa).

It belongs to the class-II aminoacyl-tRNA synthetase family. As to quaternary structure, tetramer of two alpha and two beta subunits.

The protein resides in the cytoplasm. It catalyses the reaction tRNA(Gly) + glycine + ATP = glycyl-tRNA(Gly) + AMP + diphosphate. The chain is Glycine--tRNA ligase beta subunit from Baumannia cicadellinicola subsp. Homalodisca coagulata.